Here is a 435-residue protein sequence, read N- to C-terminus: Gamma-glutamyl phosphate reductase (435 aa).

This sequence belongs to the gamma-glutamyl phosphate reductase family.

The protein localises to the cytoplasm. The catalysed reaction is L-glutamate 5-semialdehyde + phosphate + NADP(+) = L-glutamyl 5-phosphate + NADPH + H(+). It participates in amino-acid biosynthesis; L-proline biosynthesis; L-glutamate 5-semialdehyde from L-glutamate: step 2/2. Its function is as follows. Catalyzes the NADPH-dependent reduction of L-glutamate 5-phosphate into L-glutamate 5-semialdehyde and phosphate. The product spontaneously undergoes cyclization to form 1-pyrroline-5-carboxylate. This chain is Gamma-glutamyl phosphate reductase, found in Xylella fastidiosa (strain M12).